The chain runs to 144 residues: HISANIMQLHHSKHHATYVNNLNVAEQKLAEAVAKGDVTAEIALQPAIKFNGGGHINHSIFWTNLSPNGGGAPTGDLQKAIETDFGSFTKLQEKMSAVSVAVQGSGWGWLGYDKETGRLRIAACANQDPLQATTGLIPLLGIDV.

Residues His10, His58, and Asp143 each coordinate Mn(2+).

This sequence belongs to the iron/manganese superoxide dismutase family. As to quaternary structure, homotetramer. It depends on Mn(2+) as a cofactor.

The protein localises to the mitochondrion matrix. It catalyses the reaction 2 superoxide + 2 H(+) = H2O2 + O2. In terms of biological role, destroys superoxide anion radicals which are normally produced within the cells and which are toxic to biological systems. This is Superoxide dismutase [Mn], mitochondrial from Petromyzon marinus (Sea lamprey).